The sequence spans 241 residues: uncharacterized protein (241 aa).

One can recognise an HTH cro/C1-type domain in the interval 32–86; it reads LKKWRNLFNIQQIELAKYLNVSPSVISDYEVGRRKNPGVNIIKKYVLALIEIDKE. Residues 43–62 constitute a DNA-binding region (H-T-H motif); the sequence is QIELAKYLNVSPSVISDYEV.

This is an uncharacterized protein from Methanocaldococcus jannaschii (strain ATCC 43067 / DSM 2661 / JAL-1 / JCM 10045 / NBRC 100440) (Methanococcus jannaschii).